The chain runs to 378 residues: Alkaline elastase YaB (378 aa).

An N-terminal signal peptide occupies residues 1–27; it reads MNKKMGKIVAGTALIISVAFSSSIAQA. A propeptide spanning residues 28–110 is cleaved from the precursor; the sequence is AEEAKEKYLI…IEEDAEVTTM (83 aa). Position 111 (Gln-111) interacts with Ca(2+). The Peptidase S8 domain maps to 114 to 377; the sequence is PWGINRVQAP…SGLVNAEAAT (264 aa). Asp-141 functions as the Charge relay system in the catalytic mechanism. Ca(2+) is bound at residue Asp-149. His-171 (charge relay system) is an active-site residue. Ca(2+)-binding residues include Leu-182, Asn-184, Ile-186, Val-188, Ala-272, Tyr-274, and Ala-277. Catalysis depends on Ser-324, which acts as the Charge relay system.

The protein belongs to the peptidase S8 family. Requires Ca(2+) as cofactor.

It is found in the secreted. In terms of biological role, digests elastin efficiently, has a substrate preference for Ala in P1 position. This Bacillus sp. (strain YaB) protein is Alkaline elastase YaB (ale).